Here is a 113-residue protein sequence, read N- to C-terminus: Phosphorelay protein LuxU (113 aa).

The region spanning 18–113 is the HPt domain; it reads GEENVPILVN…THQCYSDLVH (96 aa). Phosphohistidine is present on histidine 57.

Monomer.

Its function is as follows. Phosphorelay protein which receives sensory signals from a sensory kinase and transmit them to LuxO. At low cell density, a phosphoryl group is transferred from the sensory kinase, probably on His-57 and this phosphoryl group is further transferred to LuxO. This chain is Phosphorelay protein LuxU (luxU), found in Vibrio cholerae serotype O1 (strain ATCC 39315 / El Tor Inaba N16961).